A 404-amino-acid chain; its full sequence is S-adenosylmethionine synthase (404 aa).

Residue H18 coordinates ATP. D20 is a Mg(2+) binding site. E46 provides a ligand contact to K(+). L-methionine contacts are provided by E59 and Q102. The tract at residues 102–112 (QSPEIAQGVDH) is flexible loop. ATP-binding positions include 178 to 180 (DGK), 249 to 250 (KF), D258, 264 to 265 (RK), A281, and K285. D258 contributes to the L-methionine binding site. L-methionine is bound at residue K289.

The protein belongs to the AdoMet synthase family. As to quaternary structure, homotetramer; dimer of dimers. Mg(2+) serves as cofactor. The cofactor is K(+).

It is found in the cytoplasm. It catalyses the reaction L-methionine + ATP + H2O = S-adenosyl-L-methionine + phosphate + diphosphate. Its pathway is amino-acid biosynthesis; S-adenosyl-L-methionine biosynthesis; S-adenosyl-L-methionine from L-methionine: step 1/1. Catalyzes the formation of S-adenosylmethionine (AdoMet) from methionine and ATP. The overall synthetic reaction is composed of two sequential steps, AdoMet formation and the subsequent tripolyphosphate hydrolysis which occurs prior to release of AdoMet from the enzyme. The chain is S-adenosylmethionine synthase from Rhodococcus jostii (strain RHA1).